Consider the following 213-residue polypeptide: Uridine kinase (213 aa).

An ATP-binding site is contributed by 15-22; it reads GASASGKS.

Belongs to the uridine kinase family.

Its subcellular location is the cytoplasm. It catalyses the reaction uridine + ATP = UMP + ADP + H(+). The enzyme catalyses cytidine + ATP = CMP + ADP + H(+). Its pathway is pyrimidine metabolism; CTP biosynthesis via salvage pathway; CTP from cytidine: step 1/3. It functions in the pathway pyrimidine metabolism; UMP biosynthesis via salvage pathway; UMP from uridine: step 1/1. In Cronobacter sakazakii (strain ATCC BAA-894) (Enterobacter sakazakii), this protein is Uridine kinase.